We begin with the raw amino-acid sequence, 359 residues long: Peroxisome assembly protein 12 (359 aa).

Residues 1–19 are Peroxisomal matrix-facing; it reads MAEHGAHFTAASVADDQPS. Residues 20–47 form a helical membrane-spanning segment; it reads IFEVVAQDSLMTAVRPALQHVVKVLAES. Residues 48 to 51 are Cytoplasmic-facing; sequence NPTH. Residues 52 to 76 form a helical membrane-spanning segment; sequence YGFLWRWFDEIFTLLDLLLQQHYLS. Residues 77-109 are Peroxisomal matrix-facing; it reads RTSASFSENFYGLKRIVMGDTHKSQRLASAGLP. The chain crosses the membrane as a helical span at residues 110 to 139; it reads KQQLWKSIMFLVLLPYLKVKLEKLVSSLRE. The Cytoplasmic segment spans residues 140–144; it reads EDEYS. The helical transmembrane segment at 145 to 183 threads the bilayer; it reads IHPPSSRWKRFYRAFLAAYPFVNMAWEGWFLVQQLRYIL. Over 184-249 the chain is Peroxisomal matrix; the sequence is GKAQHHSPLL…VGGVALSLST (66 aa). The chain crosses the membrane as a helical span at residues 250–277; that stretch reads GLSVGVFFLQFLDWWYSSENQETIKSLT. Residues 278–359 lie on the Cytoplasmic side of the membrane; sequence ALPTPPPPVH…HLIKLYSPEN (82 aa). Residues Cys-304, Cys-307, Cys-325, and Cys-328 each coordinate Zn(2+). Residues 304–343 form an RING-type; degenerate zinc finger; sequence CPLCRKTRVNDTVLATSGYVFCYRCVFHYVRSHQACPITG.

Belongs to the pex2/pex10/pex12 family. In terms of assembly, component of the PEX2-PEX10-PEX12 retrotranslocation channel, composed of PEX2, PEX10 and PEX12. Interacts with PEX19 via its cytoplasmic domain.

The protein localises to the peroxisome membrane. Its pathway is protein modification; protein ubiquitination. In terms of biological role, component of a retrotranslocation channel required for peroxisome organization by mediating export of the PEX5 receptor from peroxisomes to the cytosol, thereby promoting PEX5 recycling. The retrotranslocation channel is composed of PEX2, PEX10 and PEX12; each subunit contributing transmembrane segments that coassemble into an open channel that specifically allows the passage of PEX5 through the peroxisomal membrane. PEX12 also regulates PEX5 recycling by activating the E3 ubiquitin-protein ligase activity of PEX10. When PEX5 recycling is compromised, PEX12 stimulates PEX10-mediated polyubiquitination of PEX5, leading to its subsequent degradation. The sequence is that of Peroxisome assembly protein 12 from Homo sapiens (Human).